Reading from the N-terminus, the 201-residue chain is MAEKFIKHTGLVVPLDAANVDTDAIIPKQFLQKVTRTGFGAHLFNDWRFLDEKGQQPNPDFVLNFPQYQGASILLARENFGCGSSREHAPWALTDYGFKVVIAPSFADIFYGNSFNNQLLPVKLSDAEVDELFALVKANPGIHFDVDLEAQEVKVGEKTYRFTIDAFRRHCMMNGLDSIGLTLQHDDAIASYEAKQPAFMN.

Belongs to the LeuD family. LeuD type 1 subfamily. Heterodimer of LeuC and LeuD.

It carries out the reaction (2R,3S)-3-isopropylmalate = (2S)-2-isopropylmalate. The protein operates within amino-acid biosynthesis; L-leucine biosynthesis; L-leucine from 3-methyl-2-oxobutanoate: step 2/4. Its function is as follows. Catalyzes the isomerization between 2-isopropylmalate and 3-isopropylmalate, via the formation of 2-isopropylmaleate. The chain is 3-isopropylmalate dehydratase small subunit from Escherichia fergusonii (strain ATCC 35469 / DSM 13698 / CCUG 18766 / IAM 14443 / JCM 21226 / LMG 7866 / NBRC 102419 / NCTC 12128 / CDC 0568-73).